A 297-amino-acid polypeptide reads, in one-letter code: uncharacterized protein (297 aa).

The segment at 1-44 (MQKSKSIFIPKAFAPQQQAQAPPSKLDNKDPSVEGEGASKPKDD) is disordered. Low complexity predominate over residues 10 to 23 (PKAFAPQQQAQAPP). Over residues 26–44 (LDNKDPSVEGEGASKPKDD) the composition is skewed to basic and acidic residues.

This is an uncharacterized protein from Invertebrate iridescent virus 3 (IIV-3).